We begin with the raw amino-acid sequence, 214 residues long: Large ribosomal subunit protein bL25 (214 aa).

The segment at 193 to 214 (PRAAAEEEDTGAEGDVEAADAE) is disordered. The span at 198–214 (EEEDTGAEGDVEAADAE) shows a compositional bias: acidic residues.

This sequence belongs to the bacterial ribosomal protein bL25 family. CTC subfamily. As to quaternary structure, part of the 50S ribosomal subunit; part of the 5S rRNA/L5/L18/L25 subcomplex. Contacts the 5S rRNA. Binds to the 5S rRNA independently of L5 and L18.

In terms of biological role, this is one of the proteins that binds to the 5S RNA in the ribosome where it forms part of the central protuberance. The protein is Large ribosomal subunit protein bL25 of Nitrosococcus oceani (strain ATCC 19707 / BCRC 17464 / JCM 30415 / NCIMB 11848 / C-107).